The primary structure comprises 204 residues: Inactive ribonuclease-like protein 9 (204 aa).

An N-terminal signal peptide occupies residues 1–26 (MMRTLITIHPLPLLLLLQQLLQPVQF). Disulfide bonds link C97–C152, C115–C167, and C122–C129. N-linked (GlcNAc...) asparagine glycans are attached at residues N130 and N142.

This sequence belongs to the pancreatic ribonuclease family.

The protein localises to the secreted. Functionally, does not exhibit any ribonuclease activity. The sequence is that of Inactive ribonuclease-like protein 9 (RNASE9) from Pongo pygmaeus (Bornean orangutan).